Reading from the N-terminus, the 269-residue chain is MPELPEVETSRRGIEPHLVGATILHAHIRNGRLRWPVSDEIYRLSDTPVLSVQRRAKYLLLELPDGWIIIHLGMSGSLRILPEALPAEKHDHVDLVMSNGKILRYTDPRRFGAWLWTKELEGHNVLAHLGPEPLSDEFNGEYLQQKCAKKKTAIKPWLMDNKLVVGVGNIYASESLFAAGIHPDRLASSLSTEECDLLARVIKAVLLRSIEQGGTTLKDFLQSDGKPGYFAQELQVYGRKGEPCRVCGTPIVATKHAQRATFYCRHCQK.

Catalysis depends on P2, which acts as the Schiff-base intermediate with DNA. The active-site Proton donor is E3. Catalysis depends on K57, which acts as the Proton donor; for beta-elimination activity. 3 residues coordinate DNA: H90, R109, and K150. The FPG-type zinc-finger motif lies at 235-269 (QVYGRKGEPCRVCGTPIVATKHAQRATFYCRHCQK). R259 (proton donor; for delta-elimination activity) is an active-site residue.

This sequence belongs to the FPG family. In terms of assembly, monomer. Requires Zn(2+) as cofactor.

The catalysed reaction is Hydrolysis of DNA containing ring-opened 7-methylguanine residues, releasing 2,6-diamino-4-hydroxy-5-(N-methyl)formamidopyrimidine.. It carries out the reaction 2'-deoxyribonucleotide-(2'-deoxyribose 5'-phosphate)-2'-deoxyribonucleotide-DNA = a 3'-end 2'-deoxyribonucleotide-(2,3-dehydro-2,3-deoxyribose 5'-phosphate)-DNA + a 5'-end 5'-phospho-2'-deoxyribonucleoside-DNA + H(+). Functionally, involved in base excision repair of DNA damaged by oxidation or by mutagenic agents. Acts as a DNA glycosylase that recognizes and removes damaged bases. Has a preference for oxidized purines, such as 7,8-dihydro-8-oxoguanine (8-oxoG). Has AP (apurinic/apyrimidinic) lyase activity and introduces nicks in the DNA strand. Cleaves the DNA backbone by beta-delta elimination to generate a single-strand break at the site of the removed base with both 3'- and 5'-phosphates. The polypeptide is Formamidopyrimidine-DNA glycosylase (Salmonella heidelberg (strain SL476)).